The primary structure comprises 179 residues: Dual-action ribosomal maturation protein DarP (179 aa).

It belongs to the DarP family.

The protein localises to the cytoplasm. Its function is as follows. Member of a network of 50S ribosomal subunit biogenesis factors which assembles along the 30S-50S interface, preventing incorrect 23S rRNA structures from forming. Promotes peptidyl transferase center (PTC) maturation. This Erwinia tasmaniensis (strain DSM 17950 / CFBP 7177 / CIP 109463 / NCPPB 4357 / Et1/99) protein is Dual-action ribosomal maturation protein DarP.